Reading from the N-terminus, the 260-residue chain is MQDDLKNAPIGFFDSGLGGLSVLRKALEMMPNENYIYYGDSKHAPYGEKTPQEIRSLSFNAIEFLIKKGAKAIVIACNTATSAAAHDLREYYKDIPIIGIEPALKPAIKLHETGSVIVMATKATLTQEKFKNLMDKYGEHREVIPLPCPGLVEFIEAGNLEGEEVKNFLREKLNPYMDREISSIVLGCTHYPFVKDVIQDIVGEKVDIIDGSSGTIRELKRRLEENNMQSELKKKGDLDIFNSLEDNKILELSKKLIEIK.

Residues 14-15 and 46-47 each bind substrate; these read DS and YG. C77 (proton donor/acceptor) is an active-site residue. Position 78–79 (78–79) interacts with substrate; sequence NT. Residue C188 is the Proton donor/acceptor of the active site. A substrate-binding site is contributed by 189-190; that stretch reads TH.

It belongs to the aspartate/glutamate racemases family.

The catalysed reaction is L-glutamate = D-glutamate. It functions in the pathway cell wall biogenesis; peptidoglycan biosynthesis. Its function is as follows. Provides the (R)-glutamate required for cell wall biosynthesis. This Clostridium perfringens (strain SM101 / Type A) protein is Glutamate racemase.